The primary structure comprises 136 residues: Riboflavin kinase (136 aa).

CDP is bound at residue 15–20 (GLGEGR). Threonine 44 and asparagine 46 together coordinate Mg(2+). FMN contacts are provided by threonine 103 and glutamate 111. 116–119 (YYLR) serves as a coordination point for CDP.

The protein belongs to the archaeal riboflavin kinase family. Mg(2+) serves as cofactor.

It catalyses the reaction riboflavin + CTP = CDP + FMN + H(+). It functions in the pathway cofactor biosynthesis; FMN biosynthesis; FMN from riboflavin (CTP route): step 1/1. Functionally, catalyzes the CTP-dependent phosphorylation of riboflavin (vitamin B2) to form flavin mononucleotide (FMN). The protein is Riboflavin kinase of Sulfurisphaera tokodaii (strain DSM 16993 / JCM 10545 / NBRC 100140 / 7) (Sulfolobus tokodaii).